We begin with the raw amino-acid sequence, 140 residues long: ATP synthase epsilon chain (140 aa).

Belongs to the ATPase epsilon chain family. In terms of assembly, F-type ATPases have 2 components, CF(1) - the catalytic core - and CF(0) - the membrane proton channel. CF(1) has five subunits: alpha(3), beta(3), gamma(1), delta(1), epsilon(1). CF(0) has three main subunits: a, b and c.

It localises to the cell inner membrane. Functionally, produces ATP from ADP in the presence of a proton gradient across the membrane. This Nitrosomonas eutropha (strain DSM 101675 / C91 / Nm57) protein is ATP synthase epsilon chain.